The primary structure comprises 430 residues: 3-phosphoshikimate 1-carboxyvinyltransferase (430 aa).

The 3-phosphoshikimate site is built by Lys-21, Ser-22, and Arg-26. Position 21 (Lys-21) interacts with phosphoenolpyruvate. Phosphoenolpyruvate-binding residues include Gly-95 and Arg-123. 3-phosphoshikimate contacts are provided by Thr-167, Gln-169, Asp-315, and Lys-342. Phosphoenolpyruvate is bound at residue Gln-169. The active-site Proton acceptor is the Asp-315. The phosphoenolpyruvate site is built by Arg-346 and Arg-390.

It belongs to the EPSP synthase family. As to quaternary structure, monomer.

It localises to the cytoplasm. It carries out the reaction 3-phosphoshikimate + phosphoenolpyruvate = 5-O-(1-carboxyvinyl)-3-phosphoshikimate + phosphate. It functions in the pathway metabolic intermediate biosynthesis; chorismate biosynthesis; chorismate from D-erythrose 4-phosphate and phosphoenolpyruvate: step 6/7. In terms of biological role, catalyzes the transfer of the enolpyruvyl moiety of phosphoenolpyruvate (PEP) to the 5-hydroxyl of shikimate-3-phosphate (S3P) to produce enolpyruvyl shikimate-3-phosphate and inorganic phosphate. The chain is 3-phosphoshikimate 1-carboxyvinyltransferase from Endomicrobium trichonymphae.